The primary structure comprises 172 residues: Large ribosomal subunit protein bL17 (172 aa).

The tract at residues 153–172 is disordered; the sequence is AQAAEPVAAAEPATPATTAG.

It belongs to the bacterial ribosomal protein bL17 family. In terms of assembly, part of the 50S ribosomal subunit. Contacts protein L32.

The chain is Large ribosomal subunit protein bL17 from Sorangium cellulosum (strain So ce56) (Polyangium cellulosum (strain So ce56)).